The chain runs to 530 residues: Autoinducer-2 kinase (530 aa).

The protein belongs to the FGGY kinase family.

It localises to the cytoplasm. The enzyme catalyses (S)-4,5-dihydroxypentane-2,3-dione + ATP = (2S)-2-hydroxy-3,4-dioxopentyl phosphate + ADP + H(+). Catalyzes the phosphorylation of autoinducer-2 (AI-2) to phospho-AI-2, which subsequently inactivates the transcriptional regulator LsrR and leads to the transcription of the lsr operon. Phosphorylates the ring-open form of (S)-4,5-dihydroxypentane-2,3-dione (DPD), which is the precursor to all AI-2 signaling molecules, at the C5 position. The polypeptide is Autoinducer-2 kinase (Escherichia coli (strain ATCC 8739 / DSM 1576 / NBRC 3972 / NCIMB 8545 / WDCM 00012 / Crooks)).